A 309-amino-acid polypeptide reads, in one-letter code: 2-dehydro-3-deoxygluconokinase (309 aa).

Residues 28 to 32 (GDTLN), Y88, 102 to 104 (YWR), and R170 contribute to the substrate site. ATP contacts are provided by residues 168–170 (NYR), 228–233 (KRGADS), and 261–264 (AAGD). D264 is a binding site for substrate. Catalysis depends on D264, which acts as the Proton acceptor.

This sequence belongs to the carbohydrate kinase pfkB family.

The catalysed reaction is 2-dehydro-3-deoxy-D-gluconate + ATP = 2-dehydro-3-deoxy-6-phospho-D-gluconate + ADP + H(+). It participates in carbohydrate acid metabolism; 2-dehydro-3-deoxy-D-gluconate degradation; D-glyceraldehyde 3-phosphate and pyruvate from 2-dehydro-3-deoxy-D-gluconate: step 1/2. Functionally, catalyzes the phosphorylation of 2-keto-3-deoxygluconate (KDG) to produce 2-keto-3-deoxy-6-phosphogluconate (KDPG). The protein is 2-dehydro-3-deoxygluconokinase (kdgK) of Escherichia coli (strain ATCC 9637 / CCM 2024 / DSM 1116 / LMG 11080 / NBRC 13500 / NCIMB 8666 / NRRL B-766 / W).